The sequence spans 308 residues: Peptidyl-prolyl cis-trans isomerase CYP8 (308 aa).

In terms of domain architecture, PPIase cyclophilin-type spans Phe-56–Ser-215.

It carries out the reaction [protein]-peptidylproline (omega=180) = [protein]-peptidylproline (omega=0). Its function is as follows. PPIases accelerate the folding of proteins. It catalyzes the cis-trans isomerization of proline imidic peptide bonds in oligopeptides. The sequence is that of Peptidyl-prolyl cis-trans isomerase CYP8 (CPR8) from Saccharomyces cerevisiae (strain ATCC 204508 / S288c) (Baker's yeast).